The sequence spans 23 residues: 48 kDa cell wall protein (23 aa).

Its subcellular location is the secreted. The protein localises to the cell wall. This Nicotiana tabacum (Common tobacco) protein is 48 kDa cell wall protein.